Reading from the N-terminus, the 419-residue chain is Ribosome biogenesis protein WDR12 homolog (419 aa).

Residues 10–91 form a ubiquitin-like (UBL) domain region; it reads VQVHLKTKQE…EDSIEIEYVE (82 aa). WD repeat units follow at residues 103 to 140, 142 to 184, 191 to 230, 249 to 287, 289 to 328, 334 to 374, and 378 to 416; these read LHDD…KLTI, GHTA…NAVE, GHER…AGES, GHRE…IKTE, STNK…GSVV, GHNA…APLY, and GHGE…VENM.

The protein belongs to the WD repeat WDR12/YTM1 family.

It localises to the nucleus. The protein resides in the nucleolus. Its subcellular location is the nucleoplasm. Its function is as follows. Required for maturation of ribosomal RNAs and formation of the large ribosomal subunit. The polypeptide is Ribosome biogenesis protein WDR12 homolog (Drosophila mojavensis (Fruit fly)).